Reading from the N-terminus, the 194-residue chain is Lymphocyte antigen 6 complex locus protein G5b (194 aa).

Positions 1–18 are cleaved as a signal peptide; the sequence is MRARVLVGMLTMVGFAMG. In terms of domain architecture, UPAR/Ly6 spans 26–118; it reads RTCHLCLLED…SAQHQSTLRG (93 aa). Intrachain disulfides connect C28-C55, C31-C40, C47-C73, C81-C98, and C99-C104. The N-linked (GlcNAc...) asparagine glycan is linked to N63. N-linked (GlcNAc...) asparagine glycosylation is present at N141.

Monomer. Post-translationally, N-glycosylated.

The protein resides in the secreted. The chain is Lymphocyte antigen 6 complex locus protein G5b (Ly6g5b) from Mus musculus (Mouse).